The following is a 348-amino-acid chain: Phospho-2-dehydro-3-deoxyheptonate aldolase, Trp-sensitive (348 aa).

Belongs to the class-I DAHP synthase family.

It catalyses the reaction D-erythrose 4-phosphate + phosphoenolpyruvate + H2O = 7-phospho-2-dehydro-3-deoxy-D-arabino-heptonate + phosphate. It participates in metabolic intermediate biosynthesis; chorismate biosynthesis; chorismate from D-erythrose 4-phosphate and phosphoenolpyruvate: step 1/7. Functionally, stereospecific condensation of phosphoenolpyruvate (PEP) and D-erythrose-4-phosphate (E4P) giving rise to 3-deoxy-D-arabino-heptulosonate-7-phosphate (DAHP). In Buchnera aphidicola subsp. Schizaphis graminum (strain Sg), this protein is Phospho-2-dehydro-3-deoxyheptonate aldolase, Trp-sensitive (aroH).